The chain runs to 277 residues: F420-dependent methylenetetrahydromethanopterin dehydrogenase (277 aa).

Residues 249 to 277 (EKATDSVSRKPHGADGKRLNKTKLMEKPE) are disordered.

Belongs to the MTD family.

It catalyses the reaction 5,10-methylenetetrahydromethanopterin + oxidized coenzyme F420-(gamma-L-Glu)(n) + 2 H(+) = 5,10-methenyl-5,6,7,8-tetrahydromethanopterin + reduced coenzyme F420-(gamma-L-Glu)(n). It functions in the pathway one-carbon metabolism; methanogenesis from CO(2); 5,10-methylene-5,6,7,8-tetrahydromethanopterin from 5,10-methenyl-5,6,7,8-tetrahydromethanopterin (coenzyme F420 route): step 1/1. Catalyzes the reversible reduction of methenyl-H(4)MPT(+) to methylene-H(4)MPT. This is F420-dependent methylenetetrahydromethanopterin dehydrogenase from Methanococcus aeolicus (strain ATCC BAA-1280 / DSM 17508 / OCM 812 / Nankai-3).